The primary structure comprises 158 residues: MAGTPQPRALGPDALDVSTDDLAGLLAGNTGRIKTVITDQKVIAGIGNAYSDEILHVAKISPFATAGKLSGAQLTCLHEAMASVLSDAVRRSVGQGAAMLKGEKRSGLRVHARTGLPCPVCGDTVREVSFADKSFQYCPTCQTGGKALADRRMSRLLK.

Residues 109–143 (RVHARTGLPCPVCGDTVREVSFADKSFQYCPTCQT) form an FPG-type zinc finger.

This is an uncharacterized protein from Mycobacterium tuberculosis (strain ATCC 25618 / H37Rv).